The sequence spans 168 residues: CASP-like protein 4D1 (168 aa).

Residues 1 to 11 (MAPPPPSLASR) lie on the Cytoplasmic side of the membrane. The chain crosses the membrane as a helical span at residues 12-32 (MAALILRILTFIFLIASLVIL). Residues 33–57 (TTNTATLELDLVEVKVHFKDVYAYR) lie on the Extracellular side of the membrane. A helical membrane pass occupies residues 58 to 78 (YMLATIVIGLAYTVLQIAFTL). The Cytoplasmic portion of the chain corresponds to 79 to 97 (YYVATGNRMMSGDGNLAFD). A helical membrane pass occupies residues 98-118 (FFGDKVISYILVTGAAAGFAS). At 119–144 (TKDIKPVFSGSGDFDAFINKGYASAS) the chain is on the extracellular side. The helical transmembrane segment at 145-165 (LLLIGFVCTAVLSVFSSYALP) threads the bilayer. The Cytoplasmic portion of the chain corresponds to 166 to 168 (KQV).

This sequence belongs to the Casparian strip membrane proteins (CASP) family. Homodimer and heterodimers.

The protein resides in the cell membrane. This Ricinus communis (Castor bean) protein is CASP-like protein 4D1.